Consider the following 73-residue polypeptide: Small ribosomal subunit protein bS18 (73 aa).

The protein belongs to the bacterial ribosomal protein bS18 family. In terms of assembly, part of the 30S ribosomal subunit. Forms a tight heterodimer with protein bS6.

Functionally, binds as a heterodimer with protein bS6 to the central domain of the 16S rRNA, where it helps stabilize the platform of the 30S subunit. This Prochlorococcus marinus (strain SARG / CCMP1375 / SS120) protein is Small ribosomal subunit protein bS18.